Reading from the N-terminus, the 947-residue chain is Protein RRC1-like (947 aa).

A compositionally biased stretch (basic and acidic residues) spans 1-11 (MVKDEFFLDHP). Disordered stretches follow at residues 1–35 (MVKDEFFLDHPGRKHRSRNTEKKKKPRRRERRMKQ) and 63–167 (PNDN…DELP). The span at 12–34 (GRKHRSRNTEKKKKPRRRERRMK) shows a compositional bias: basic residues. 2 stretches are compositionally biased toward basic and acidic residues: residues 66–84 (NKLKPDSQGEKSRDGDSIS) and 104–155 (KGPE…DHNS). An RRM domain is found at 187 to 268 (TNLYVVNLSS…YELKIGWGKV (82 aa)). An SURP motif repeat occupies 336–379 (IIDTMALNVLDGGCAFEQAIMERGRGNPLFNFLFELGSKEHTYY). The disordered stretch occupies residues 412–434 (PPLPATRSPEHGKESRGTYAAGK). The CID domain maps to 444 to 589 (LTDSQRDEFE…GLRATFLRSR (146 aa)). Residues 638–672 (LMNRPISELERRCRHNGLSLLGGREMMVARLVCLK) form the SAP domain. 2 disordered regions span residues 752–797 (REDD…PENE) and 846–947 (GLSG…RGMR). Basic and acidic residues-rich tracts occupy residues 854–876 (LPEKREKREDSRDSSRKRNRSES), 888–916 (LTRERVRDHDLDKDRHRDRDRQQHDLDKD), and 924–947 (SSRERDDHDRSRERDRDWRRRGMR).

In terms of tissue distribution, expressed in leaves, inflorescence stems, roots, flower buds, open flowers and siliques.

In terms of biological role, probable SR-like splicing factor. This is Protein RRC1-like from Arabidopsis thaliana (Mouse-ear cress).